Here is a 215-residue protein sequence, read N- to C-terminus: Redox-sensing transcriptional repressor Rex (215 aa).

A DNA-binding region (H-T-H motif) is located at residues 18-57 (LYYRFLKNLHASGKQRVSSAELSDAVKVDSATIRRDFSYF). NAD(+) is bound at residue 92-97 (GVGNLG).

It belongs to the transcriptional regulatory Rex family. As to quaternary structure, homodimer.

Its subcellular location is the cytoplasm. Modulates transcription in response to changes in cellular NADH/NAD(+) redox state. The sequence is that of Redox-sensing transcriptional repressor Rex from Bacillus velezensis (strain DSM 23117 / BGSC 10A6 / LMG 26770 / FZB42) (Bacillus amyloliquefaciens subsp. plantarum).